Reading from the N-terminus, the 231-residue chain is Large ribosomal subunit protein uL1 (231 aa).

Belongs to the universal ribosomal protein uL1 family. In terms of assembly, part of the 50S ribosomal subunit.

Binds directly to 23S rRNA. The L1 stalk is quite mobile in the ribosome, and is involved in E site tRNA release. In terms of biological role, protein L1 is also a translational repressor protein, it controls the translation of the L11 operon by binding to its mRNA. In Francisella tularensis subsp. tularensis (strain WY96-3418), this protein is Large ribosomal subunit protein uL1.